A 456-amino-acid chain; its full sequence is Bifunctional protein GlmU (456 aa).

Residues 1 to 229 (MLNNAMSVVI…LSEVEGVNNR (229 aa)) are pyrophosphorylase. UDP-N-acetyl-alpha-D-glucosamine-binding positions include 11–14 (LAAG), Lys-25, Gln-76, 81–82 (GT), 103–105 (YGD), Gly-140, Glu-154, Asn-169, and Asn-227. Asp-105 is a Mg(2+) binding site. Asn-227 serves as a coordination point for Mg(2+). The tract at residues 230–250 (LQLSRLERVYQSEQAEKLLLA) is linker. The interval 251–456 (GVMLRDPARF…EGWRRPVKKK (206 aa)) is N-acetyltransferase. Residues Arg-333 and Lys-351 each coordinate UDP-N-acetyl-alpha-D-glucosamine. His-363 acts as the Proton acceptor in catalysis. Residues Tyr-366 and Asn-377 each coordinate UDP-N-acetyl-alpha-D-glucosamine. Acetyl-CoA is bound by residues Ala-380, 386 to 387 (NY), Ser-405, Ala-423, and Arg-440.

In the N-terminal section; belongs to the N-acetylglucosamine-1-phosphate uridyltransferase family. The protein in the C-terminal section; belongs to the transferase hexapeptide repeat family. As to quaternary structure, homotrimer. The cofactor is Mg(2+).

It localises to the cytoplasm. It catalyses the reaction alpha-D-glucosamine 1-phosphate + acetyl-CoA = N-acetyl-alpha-D-glucosamine 1-phosphate + CoA + H(+). The enzyme catalyses N-acetyl-alpha-D-glucosamine 1-phosphate + UTP + H(+) = UDP-N-acetyl-alpha-D-glucosamine + diphosphate. It participates in nucleotide-sugar biosynthesis; UDP-N-acetyl-alpha-D-glucosamine biosynthesis; N-acetyl-alpha-D-glucosamine 1-phosphate from alpha-D-glucosamine 6-phosphate (route II): step 2/2. Its pathway is nucleotide-sugar biosynthesis; UDP-N-acetyl-alpha-D-glucosamine biosynthesis; UDP-N-acetyl-alpha-D-glucosamine from N-acetyl-alpha-D-glucosamine 1-phosphate: step 1/1. It functions in the pathway bacterial outer membrane biogenesis; LPS lipid A biosynthesis. Functionally, catalyzes the last two sequential reactions in the de novo biosynthetic pathway for UDP-N-acetylglucosamine (UDP-GlcNAc). The C-terminal domain catalyzes the transfer of acetyl group from acetyl coenzyme A to glucosamine-1-phosphate (GlcN-1-P) to produce N-acetylglucosamine-1-phosphate (GlcNAc-1-P), which is converted into UDP-GlcNAc by the transfer of uridine 5-monophosphate (from uridine 5-triphosphate), a reaction catalyzed by the N-terminal domain. This is Bifunctional protein GlmU from Escherichia coli O6:K15:H31 (strain 536 / UPEC).